Reading from the N-terminus, the 221-residue chain is Ribonuclease 3 (221 aa).

The RNase III domain maps to 1–123; that stretch reads MERTGHAFAD…LIAVLYLDGG (123 aa). Residue Glu-36 coordinates Mg(2+). Residue Asp-40 is part of the active site. Positions 109 and 112 each coordinate Mg(2+). Residue Glu-112 is part of the active site. A DRBM domain is found at 148 to 217; it reads DAKTELQEWA…AAALLLREGV (70 aa).

The protein belongs to the ribonuclease III family. In terms of assembly, homodimer. Mg(2+) is required as a cofactor.

Its subcellular location is the cytoplasm. It carries out the reaction Endonucleolytic cleavage to 5'-phosphomonoester.. Its function is as follows. Digests double-stranded RNA. Involved in the processing of primary rRNA transcript to yield the immediate precursors to the large and small rRNAs (23S and 16S). Processes some mRNAs, and tRNAs when they are encoded in the rRNA operon. Processes pre-crRNA and tracrRNA of type II CRISPR loci if present in the organism. The sequence is that of Ribonuclease 3 from Mesorhizobium japonicum (strain LMG 29417 / CECT 9101 / MAFF 303099) (Mesorhizobium loti (strain MAFF 303099)).